We begin with the raw amino-acid sequence, 196 residues long: Large ribosomal subunit protein uL18 (196 aa).

It belongs to the universal ribosomal protein uL18 family. In terms of assembly, part of the 50S ribosomal subunit. Contacts the 5S and 23S rRNAs.

Functionally, this is one of the proteins that bind and probably mediate the attachment of the 5S RNA into the large ribosomal subunit, where it forms part of the central protuberance. This is Large ribosomal subunit protein uL18 from Desulfurococcus amylolyticus (strain DSM 18924 / JCM 16383 / VKM B-2413 / 1221n) (Desulfurococcus kamchatkensis).